The sequence spans 504 residues: Protein Dok-7 (504 aa).

One can recognise a PH domain in the interval 4–109; it reads AALVEGQVKL…WDARIRYALG (106 aa). Residues 105 to 210 enclose the IRS-type PTB domain; sequence RYALGEVHRF…RGISPTKGPF (106 aa). Disordered stretches follow at residues 210–229, 249–351, and 411–483; these read FGLRPVLPDPSPPGPSTVEE, SHAG…YSSS, and LCLA…PHAG. Composition is skewed to low complexity over residues 263 to 279 and 288 to 310; these read LSSSSSEASHLDVSASS and SSSSASTSQEGPRPAAAQAAGEA. The span at 331-341 shows a compositional bias: polar residues; sequence GRQSSSDSGIA.

Homodimer. Forms a heterotetramer composed of 2 DOK7 and 2 MUSK molecules which facilitates MUSK trans-autophosphorylation on tyrosine residue and activation. Interacts (via IRS-type PTB domain) with MUSK (via cytoplasmic part); requires MUSK phosphorylation. In terms of tissue distribution, preferentially expressed in skeletal muscle and heart. Present in thigh muscle, diaphragm and heart but not in the liver or spleen (at protein level).

It localises to the cell membrane. The protein localises to the synapse. Its function is as follows. Probable muscle-intrinsic activator of MUSK that plays an essential role in neuromuscular synaptogenesis. Acts in aneural activation of MUSK and subsequent acetylcholine receptor (AchR) clustering in myotubes. Induces autophosphorylation of MUSK. The chain is Protein Dok-7 (DOK7) from Homo sapiens (Human).